The chain runs to 211 residues: Large ribosomal subunit protein uL3 (211 aa).

Gln150 carries the post-translational modification N5-methylglutamine.

Belongs to the universal ribosomal protein uL3 family. In terms of assembly, part of the 50S ribosomal subunit. Forms a cluster with proteins L14 and L19. In terms of processing, methylated by PrmB.

Functionally, one of the primary rRNA binding proteins, it binds directly near the 3'-end of the 23S rRNA, where it nucleates assembly of the 50S subunit. This is Large ribosomal subunit protein uL3 from Pseudomonas syringae pv. tomato (strain ATCC BAA-871 / DC3000).